The following is a 132-amino-acid chain: Protein p15 (132 aa).

Functionally, may play a role in infectivity. This is Protein p15 from Panicum mosaic virus (strain United States/Kansas 109S) (PMV).